Here is a 586-residue protein sequence, read N- to C-terminus: NADH-quinone oxidoreductase subunit C/D 2 (586 aa).

The NADH dehydrogenase I subunit C stretch occupies residues 1-173 (MKWVNKGTVE…RTDPPSHDFE (173 aa)). An NADH dehydrogenase I subunit D region spans residues 197-586 (AELVLNWGPL…LDPVVGETDR (390 aa)).

In the N-terminal section; belongs to the complex I 30 kDa subunit family. It in the C-terminal section; belongs to the complex I 49 kDa subunit family. As to quaternary structure, NDH-1 is composed of 13 different subunits. Subunits NuoB, CD, E, F, and G constitute the peripheral sector of the complex.

It is found in the cell inner membrane. The catalysed reaction is a quinone + NADH + 5 H(+)(in) = a quinol + NAD(+) + 4 H(+)(out). NDH-1 shuttles electrons from NADH, via FMN and iron-sulfur (Fe-S) centers, to quinones in the respiratory chain. The immediate electron acceptor for the enzyme in this species is believed to be ubiquinone. Couples the redox reaction to proton translocation (for every two electrons transferred, four hydrogen ions are translocated across the cytoplasmic membrane), and thus conserves the redox energy in a proton gradient. In Aquifex aeolicus (strain VF5), this protein is NADH-quinone oxidoreductase subunit C/D 2 (nuoC2).